Here is a 101-residue protein sequence, read N- to C-terminus: Small ribosomal subunit protein uS14 (101 aa).

The interval 1–24 (MAKVSSIKKNEKRKKLSQSLHNKR) is disordered. A compositionally biased stretch (basic residues) spans 10 to 24 (NEKRKKLSQSLHNKR).

The protein belongs to the universal ribosomal protein uS14 family. In terms of assembly, part of the 30S ribosomal subunit. Contacts proteins S3 and S10.

In terms of biological role, binds 16S rRNA, required for the assembly of 30S particles and may also be responsible for determining the conformation of the 16S rRNA at the A site. This chain is Small ribosomal subunit protein uS14, found in Rickettsia bellii (strain OSU 85-389).